The primary structure comprises 637 residues: ATP-dependent zinc metalloprotease FtsH (637 aa).

Over 1 to 6 (MNNQGR) the chain is Cytoplasmic. Residues 7-27 (SILAWAALFIFVILLFNVFQS) traverse the membrane as a helical segment. Residues 28-103 (DGLLGVRNNI…VVPLETRMNT (76 aa)) are Periplasmic-facing. Residues 104–124 (FLGFLISWFPMLLLIGVWVFF) traverse the membrane as a helical segment. Residues 125 to 637 (MRQMHGGGKA…TKDKKENIIS (513 aa)) lie on the Cytoplasmic side of the membrane. 195–202 (GPPGTGKT) serves as a coordination point for ATP. His-417 provides a ligand contact to Zn(2+). Residue Glu-418 is part of the active site. 2 residues coordinate Zn(2+): His-421 and Asp-495.

In the central section; belongs to the AAA ATPase family. This sequence in the C-terminal section; belongs to the peptidase M41 family. As to quaternary structure, homohexamer. It depends on Zn(2+) as a cofactor.

Its subcellular location is the cell inner membrane. Functionally, acts as a processive, ATP-dependent zinc metallopeptidase for both cytoplasmic and membrane proteins. Plays a role in the quality control of integral membrane proteins. The sequence is that of ATP-dependent zinc metalloprotease FtsH from Rickettsia prowazekii (strain Madrid E).